The sequence spans 202 residues: Eukaryotic translation initiation factor isoform 4E (202 aa).

Residues 1-24 (MATEAPPPVDTTEVPPFTAAETAV) are disordered. MRNA-binding positions include 46 to 51 (QGAAWG), lysine 78, and 96 to 97 (WE). A disulfide bond links cysteine 101 and cysteine 140. MRNA contacts are provided by residues 147–152 (RRSQDK) and 191–194 (KRER).

This sequence belongs to the eukaryotic initiation factor 4E family. As to quaternary structure, EIF4F is a multi-subunit complex, the composition of which varies with external and internal environmental conditions. It is composed of at least EIF4A, EIF4E and EIF4G. EIF4E is also known to interact with other partners. In higher plants two isoforms of EIF4F have been identified, named isoform EIF4F and isoform EIF(iso)4F. Isoform EIF4F has subunits p220 and p26, whereas isoform EIF(iso)4F has subunits p82 and p28. (Microbial infection) Interacts with viral genome-linked protein (VPg); this interaction is possible in susceptible hosts but impaired in resistant plants. Post-translationally, according to the redox status, the Cys-101-Cys-140 disulfide bridge may have a role in regulating protein function by affecting its ability to bind capped mRNA.

It localises to the cytoplasm. The protein localises to the nucleus. In terms of biological role, component of the protein complex eIF4F, which is involved in the recognition of the mRNA cap, ATP-dependent unwinding of 5'-terminal secondary structure and recruitment of mRNA to the ribosome. Recognizes and binds the 7-methylguanosine-containing mRNA cap during an early step in the initiation of protein synthesis and facilitates ribosome binding by inducing the unwinding of the mRNAs secondary structures. Key component of recessive resistance to potyviruses. Its function is as follows. (Microbial infection) Susceptibility host factor required for viral infection by recruiting viral RNAs to the host ribosomal complex via an interaction with viral genome-linked protein (VPg). This chain is Eukaryotic translation initiation factor isoform 4E, found in Capsicum annuum (Capsicum pepper).